The primary structure comprises 336 residues: Ribosomal RNA large subunit methyltransferase F (336 aa).

The protein belongs to the methyltransferase superfamily. METTL16/RlmF family.

The protein localises to the cytoplasm. The enzyme catalyses adenosine(1618) in 23S rRNA + S-adenosyl-L-methionine = N(6)-methyladenosine(1618) in 23S rRNA + S-adenosyl-L-homocysteine + H(+). Specifically methylates the adenine in position 1618 of 23S rRNA. The polypeptide is Ribosomal RNA large subunit methyltransferase F (Serratia proteamaculans (strain 568)).